The primary structure comprises 87 residues: MAHHKSAIKRIKQNEKRNARNRHQKSTLKTYIKRVREAVESKDKEAAVAALQVAIPVIDKTATKGVIHKANASRSVSRLTKLVNTLG.

Over residues 1-11 (MAHHKSAIKRI) the composition is skewed to basic residues. A disordered region spans residues 1–26 (MAHHKSAIKRIKQNEKRNARNRHQKS).

Belongs to the bacterial ribosomal protein bS20 family.

Functionally, binds directly to 16S ribosomal RNA. This chain is Small ribosomal subunit protein bS20, found in Trichlorobacter lovleyi (strain ATCC BAA-1151 / DSM 17278 / SZ) (Geobacter lovleyi).